Reading from the N-terminus, the 233-residue chain is Leucyl/phenylalanyl-tRNA--protein transferase (233 aa).

The protein belongs to the L/F-transferase family.

It localises to the cytoplasm. The enzyme catalyses N-terminal L-lysyl-[protein] + L-leucyl-tRNA(Leu) = N-terminal L-leucyl-L-lysyl-[protein] + tRNA(Leu) + H(+). The catalysed reaction is N-terminal L-arginyl-[protein] + L-leucyl-tRNA(Leu) = N-terminal L-leucyl-L-arginyl-[protein] + tRNA(Leu) + H(+). It carries out the reaction L-phenylalanyl-tRNA(Phe) + an N-terminal L-alpha-aminoacyl-[protein] = an N-terminal L-phenylalanyl-L-alpha-aminoacyl-[protein] + tRNA(Phe). In terms of biological role, functions in the N-end rule pathway of protein degradation where it conjugates Leu, Phe and, less efficiently, Met from aminoacyl-tRNAs to the N-termini of proteins containing an N-terminal arginine or lysine. The polypeptide is Leucyl/phenylalanyl-tRNA--protein transferase (Shewanella denitrificans (strain OS217 / ATCC BAA-1090 / DSM 15013)).